We begin with the raw amino-acid sequence, 427 residues long: Trigger factor (427 aa).

A PPIase FKBP-type domain is found at glycine 163–proline 248.

It belongs to the FKBP-type PPIase family. Tig subfamily.

The protein localises to the cytoplasm. The enzyme catalyses [protein]-peptidylproline (omega=180) = [protein]-peptidylproline (omega=0). In terms of biological role, involved in protein export. Acts as a chaperone by maintaining the newly synthesized protein in an open conformation. Functions as a peptidyl-prolyl cis-trans isomerase. The protein is Trigger factor of Clostridium botulinum (strain Eklund 17B / Type B).